The primary structure comprises 626 residues: uncharacterized protein (626 aa).

A helical transmembrane segment spans residues 103-123 (AGALLVKFFPLLLLYPLTYLA). The Protein kinase domain occupies 200–618 (FENREPVGSG…DILEAARPFL (419 aa)). ATP is bound by residues 206–214 (VGSGCVAQV) and lysine 311. The Proton acceptor role is filled by aspartate 445.

The protein belongs to the protein kinase superfamily. ADCK protein kinase family.

Its subcellular location is the mitochondrion. The protein localises to the membrane. Functionally, the function of this protein is not yet clear. It is not known if it has protein kinase activity and what type of substrate it would phosphorylate (Ser, Thr or Tyr). Involved in the mitochondrial import of CoQ precursors, plays a role in muscle mitochondrial function and fatty acid beta-oxidation. This is an uncharacterized protein from Homo sapiens (Human).